The sequence spans 899 residues: Protein translocase subunit SecA (899 aa).

Residues glutamine 87, 105-109 (GEGKT), and aspartate 512 contribute to the ATP site. 2 disordered regions span residues 573–592 (RRIDNQLRGRSGRQGDPGSS) and 861–899 (ITVNDDEHPAEPAKSQKNAGRNEPCPCGSGKKYKKCCGK). Zn(2+) is bound by residues cysteine 885, cysteine 887, cysteine 896, and cysteine 897.

It belongs to the SecA family. Monomer and homodimer. Part of the essential Sec protein translocation apparatus which comprises SecA, SecYEG and auxiliary proteins SecDF-YajC and YidC. Zn(2+) serves as cofactor.

It localises to the cell inner membrane. The protein localises to the cytoplasm. It carries out the reaction ATP + H2O + cellular proteinSide 1 = ADP + phosphate + cellular proteinSide 2.. In terms of biological role, part of the Sec protein translocase complex. Interacts with the SecYEG preprotein conducting channel. Has a central role in coupling the hydrolysis of ATP to the transfer of proteins into and across the cell membrane, serving as an ATP-driven molecular motor driving the stepwise translocation of polypeptide chains across the membrane. This is Protein translocase subunit SecA from Trichlorobacter lovleyi (strain ATCC BAA-1151 / DSM 17278 / SZ) (Geobacter lovleyi).